The primary structure comprises 258 residues: Imidazole glycerol phosphate synthase subunit HisF (258 aa).

Residues aspartate 11 and aspartate 130 contribute to the active site.

This sequence belongs to the HisA/HisF family. As to quaternary structure, heterodimer of HisH and HisF.

Its subcellular location is the cytoplasm. The catalysed reaction is 5-[(5-phospho-1-deoxy-D-ribulos-1-ylimino)methylamino]-1-(5-phospho-beta-D-ribosyl)imidazole-4-carboxamide + L-glutamine = D-erythro-1-(imidazol-4-yl)glycerol 3-phosphate + 5-amino-1-(5-phospho-beta-D-ribosyl)imidazole-4-carboxamide + L-glutamate + H(+). Its pathway is amino-acid biosynthesis; L-histidine biosynthesis; L-histidine from 5-phospho-alpha-D-ribose 1-diphosphate: step 5/9. In terms of biological role, IGPS catalyzes the conversion of PRFAR and glutamine to IGP, AICAR and glutamate. The HisF subunit catalyzes the cyclization activity that produces IGP and AICAR from PRFAR using the ammonia provided by the HisH subunit. The sequence is that of Imidazole glycerol phosphate synthase subunit HisF from Xanthobacter autotrophicus (strain ATCC BAA-1158 / Py2).